Consider the following 361-residue polypeptide: Putative geranylgeranyl pyrophosphate synthase 8, chloroplastic (361 aa).

The transit peptide at 1-39 (MATTVHLSSFSLFIQSRGRRDNSISSVKSLKKRTGLSPS) directs the protein to the chloroplast. The segment at 24 to 58 (ISSVKSLKKRTGLSPSSALTSQGGRDMIPPQGKSN) is disordered. The segment covering 36–46 (LSPSSALTSQG) has biased composition (polar residues). Residues Lys107, Arg110, and His139 each contribute to the isopentenyl diphosphate site. Positions 146 and 152 each coordinate Mg(2+). Arg157 lines the dimethylallyl diphosphate pocket. Position 158 (Arg158) interacts with isopentenyl diphosphate. The dimethylallyl diphosphate site is built by Lys246, Thr247, Gln284, Lys301, and Lys311.

This sequence belongs to the FPP/GGPP synthase family. In terms of assembly, monomer. It depends on Mg(2+) as a cofactor.

The protein resides in the plastid. It is found in the chloroplast. It carries out the reaction isopentenyl diphosphate + dimethylallyl diphosphate = (2E)-geranyl diphosphate + diphosphate. It catalyses the reaction isopentenyl diphosphate + (2E)-geranyl diphosphate = (2E,6E)-farnesyl diphosphate + diphosphate. The enzyme catalyses isopentenyl diphosphate + (2E,6E)-farnesyl diphosphate = (2E,6E,10E)-geranylgeranyl diphosphate + diphosphate. It participates in isoprenoid biosynthesis; farnesyl diphosphate biosynthesis; farnesyl diphosphate from geranyl diphosphate and isopentenyl diphosphate: step 1/1. It functions in the pathway isoprenoid biosynthesis; geranyl diphosphate biosynthesis; geranyl diphosphate from dimethylallyl diphosphate and isopentenyl diphosphate: step 1/1. The protein operates within isoprenoid biosynthesis; geranylgeranyl diphosphate biosynthesis; geranylgeranyl diphosphate from farnesyl diphosphate and isopentenyl diphosphate: step 1/1. Functionally, catalyzes the trans-addition of the three molecules of IPP onto DMAPP to form geranylgeranyl pyrophosphate. The protein is Putative geranylgeranyl pyrophosphate synthase 8, chloroplastic of Arabidopsis thaliana (Mouse-ear cress).